Reading from the N-terminus, the 629-residue chain is tRNA uridine 5-carboxymethylaminomethyl modification enzyme MnmG (629 aa).

FAD contacts are provided by residues 13 to 18, Val125, and Ser180; that span reads GGGHAG. 273–287 lines the NAD(+) pocket; the sequence is GPRYCPSIEDKVMRF. Gln370 is an FAD binding site.

The protein belongs to the MnmG family. Homodimer. Heterotetramer of two MnmE and two MnmG subunits. It depends on FAD as a cofactor.

Its subcellular location is the cytoplasm. Its function is as follows. NAD-binding protein involved in the addition of a carboxymethylaminomethyl (cmnm) group at the wobble position (U34) of certain tRNAs, forming tRNA-cmnm(5)s(2)U34. The chain is tRNA uridine 5-carboxymethylaminomethyl modification enzyme MnmG from Shigella dysenteriae serotype 1 (strain Sd197).